Reading from the N-terminus, the 770-residue chain is Kinesin-like protein klpA (770 aa).

Positions 1–152 are disordered; that stretch reads MENVQSRMQG…GLGKRGEWDQ (152 aa). Low complexity predominate over residues 85 to 105; the sequence is SSTLTRSASAASRPRGPLSSS. Positions 106-119 are enriched in polar residues; sequence TSGRPKTSMSTSRR. Residues 134–152 show a composition bias toward basic and acidic residues; it reads THQEERSYGGLGKRGEWDQ. Positions 175 to 425 form a coiled coil; it reads QESSGLKDAL…QELKGNIRVF (251 aa). The Kinesin motor domain maps to 421-756; sequence NIRVFCRVRP…LKFATKVHNT (336 aa). 514-521 is a binding site for ATP; the sequence is GQTGSGKT.

This sequence belongs to the TRAFAC class myosin-kinesin ATPase superfamily. Kinesin family. NCD subfamily.

The protein localises to the cytoplasm. It localises to the cytoskeleton. The sequence is that of Kinesin-like protein klpA (klpA) from Emericella nidulans (strain FGSC A4 / ATCC 38163 / CBS 112.46 / NRRL 194 / M139) (Aspergillus nidulans).